The chain runs to 148 residues: Large ribosomal subunit protein bL9 (148 aa).

It belongs to the bacterial ribosomal protein bL9 family.

Functionally, binds to the 23S rRNA. The polypeptide is Large ribosomal subunit protein bL9 (Pseudomonas fluorescens (strain Pf0-1)).